We begin with the raw amino-acid sequence, 77 residues long: Translation initiation factor IF-1, chloroplastic (77 aa).

An S1-like domain is found at 1–71 (MKEQKWIHEG…TRGRIIYRLR (71 aa)).

The protein belongs to the IF-1 family. Component of the 30S ribosomal translation pre-initiation complex which assembles on the 30S ribosome in the order IF-2 and IF-3, IF-1 and N-formylmethionyl-tRNA(fMet); mRNA recruitment can occur at any time during PIC assembly.

The protein localises to the plastid. It localises to the chloroplast. In terms of biological role, one of the essential components for the initiation of protein synthesis. Stabilizes the binding of IF-2 and IF-3 on the 30S subunit to which N-formylmethionyl-tRNA(fMet) subsequently binds. Helps modulate mRNA selection, yielding the 30S pre-initiation complex (PIC). Upon addition of the 50S ribosomal subunit IF-1, IF-2 and IF-3 are released leaving the mature 70S translation initiation complex. The protein is Translation initiation factor IF-1, chloroplastic of Montinia caryophyllacea (Wild clove bush).